The chain runs to 117 residues: Ribosome-binding factor A (117 aa).

This sequence belongs to the RbfA family. In terms of assembly, monomer. Binds 30S ribosomal subunits, but not 50S ribosomal subunits or 70S ribosomes.

Its subcellular location is the cytoplasm. Its function is as follows. One of several proteins that assist in the late maturation steps of the functional core of the 30S ribosomal subunit. Associates with free 30S ribosomal subunits (but not with 30S subunits that are part of 70S ribosomes or polysomes). Required for efficient processing of 16S rRNA. May interact with the 5'-terminal helix region of 16S rRNA. The polypeptide is Ribosome-binding factor A (Nitrosomonas europaea (strain ATCC 19718 / CIP 103999 / KCTC 2705 / NBRC 14298)).